A 379-amino-acid polypeptide reads, in one-letter code: Multicilin (379 aa).

2 disordered regions span residues 26 to 46 (SRRS…PWKS) and 87 to 106 (LLGT…NPSL). Positions 175–223 (EQYWKEVADQNQRALGTALIENNQLHVTLTQKQEEIASLRERNVQLKEL) form a coiled coil. The segment covering 289–309 (LQNRDPKRPRLQQEPDSKDCS) has biased composition (basic and acidic residues). The tract at residues 289–311 (LQNRDPKRPRLQQEPDSKDCSTR) is disordered.

It belongs to the geminin family. As to quaternary structure, heterodimer (via coiled-coil domain) with GMNN (via coiled-coil domain); targets GMNN to the nucleus. Can form homodimers (in vitro, via coiled-coil domain), but these are much less stable than the heterodimer formed with GMNN.

The protein resides in the nucleus. Transcription regulator specifically required for multiciliate cell differentiation. Acts in a multiprotein complex containing E2F4 and E2F5 that binds and activates genes required for centriole biogenesis. Required for the deuterosome-mediated acentriolar pathway. Plays a role in mitotic cell cycle progression by promoting cell cycle exit. Modulates GMNN activity by reducing its affinity for CDT1. The polypeptide is Multicilin (Mcidas) (Rattus norvegicus (Rat)).